We begin with the raw amino-acid sequence, 227 residues long: Cytochrome c oxidase subunit 2 (227 aa).

Residues 1-14 (MAYPMQLGFQDATS) are Mitochondrial intermembrane-facing. The helical transmembrane segment at 15–45 (PIMEELLHFHDHTLMIVFLISSLVLYIISLM) threads the bilayer. The Mitochondrial matrix portion of the chain corresponds to 46–59 (LTTKLTHTSTMDAQ). The helical transmembrane segment at 60-87 (EVETIWTILPAIILILIALPSLRILYMM) threads the bilayer. Topologically, residues 88-227 (DEINNPSLTV…YFEKWSASML (140 aa)) are mitochondrial intermembrane. Positions 161, 196, 198, 200, 204, and 207 each coordinate Cu cation. Residue Glu198 coordinates Mg(2+). Phosphotyrosine is present on Tyr218.

It belongs to the cytochrome c oxidase subunit 2 family. As to quaternary structure, component of the cytochrome c oxidase (complex IV, CIV), a multisubunit enzyme composed of 14 subunits. The complex is composed of a catalytic core of 3 subunits MT-CO1, MT-CO2 and MT-CO3, encoded in the mitochondrial DNA, and 11 supernumerary subunits COX4I, COX5A, COX5B, COX6A, COX6B, COX6C, COX7A, COX7B, COX7C, COX8 and NDUFA4, which are encoded in the nuclear genome. The complex exists as a monomer or a dimer and forms supercomplexes (SCs) in the inner mitochondrial membrane with NADH-ubiquinone oxidoreductase (complex I, CI) and ubiquinol-cytochrome c oxidoreductase (cytochrome b-c1 complex, complex III, CIII), resulting in different assemblies (supercomplex SCI(1)III(2)IV(1) and megacomplex MCI(2)III(2)IV(2)). Found in a complex with TMEM177, COA6, COX18, COX20, SCO1 and SCO2. Interacts with TMEM177 in a COX20-dependent manner. Interacts with COX20. Interacts with COX16. Cu cation serves as cofactor.

The protein localises to the mitochondrion inner membrane. It carries out the reaction 4 Fe(II)-[cytochrome c] + O2 + 8 H(+)(in) = 4 Fe(III)-[cytochrome c] + 2 H2O + 4 H(+)(out). Its function is as follows. Component of the cytochrome c oxidase, the last enzyme in the mitochondrial electron transport chain which drives oxidative phosphorylation. The respiratory chain contains 3 multisubunit complexes succinate dehydrogenase (complex II, CII), ubiquinol-cytochrome c oxidoreductase (cytochrome b-c1 complex, complex III, CIII) and cytochrome c oxidase (complex IV, CIV), that cooperate to transfer electrons derived from NADH and succinate to molecular oxygen, creating an electrochemical gradient over the inner membrane that drives transmembrane transport and the ATP synthase. Cytochrome c oxidase is the component of the respiratory chain that catalyzes the reduction of oxygen to water. Electrons originating from reduced cytochrome c in the intermembrane space (IMS) are transferred via the dinuclear copper A center (CU(A)) of subunit 2 and heme A of subunit 1 to the active site in subunit 1, a binuclear center (BNC) formed by heme A3 and copper B (CU(B)). The BNC reduces molecular oxygen to 2 water molecules using 4 electrons from cytochrome c in the IMS and 4 protons from the mitochondrial matrix. The chain is Cytochrome c oxidase subunit 2 (MT-CO2) from Bison bonasus (European bison).